The primary structure comprises 103 residues: UPF0145 protein Amet_0532 (103 aa).

This sequence belongs to the UPF0145 family.

This chain is UPF0145 protein Amet_0532, found in Alkaliphilus metalliredigens (strain QYMF).